The chain runs to 589 residues: Transmembrane 9 superfamily member 5 (589 aa).

An N-terminal signal peptide occupies residues 1-24 (MAQFLLTVLQVLLALTFWIGIGSG). The Lumenal portion of the chain corresponds to 25–227 (SSNHYNAGDH…SFHPISQKIH (203 aa)). A helical membrane pass occupies residues 228–248 (FFSFLNSITVVVLLIGLISFL). The Cytoplasmic segment spans residues 249 to 291 (FMRHLKNELRSYSIGDEEERKEAGWKLVHSDVFRCPRNISWLC). A helical membrane pass occupies residues 292-312 (AILGTGTQLLILIIALFALAF). At 313–321 (TGFLYPYNR) the chain is on the lumenal side. A helical transmembrane segment spans residues 322–342 (GMLLTSLVIMYTLTSIVAGYT). Topologically, residues 343 to 361 (STSFHSQFEGNKQKRSVRL) are cytoplasmic. The chain crosses the membrane as a helical span at residues 362-382 (AGILYPVPFFIILSVLNTVAI). Residues 383–394 (TYGATAALPFGT) lie on the Lumenal side of the membrane. The helical transmembrane segment at 395–415 (IVIIILIFTLLNIPFLMLGGV) threads the bilayer. Topologically, residues 416-450 (LGNRFGLLEFQPPSAVKRNPREIPPQNWYRRKLYQ) are cytoplasmic. The helical transmembrane segment at 451–471 (VFLGGFVPFSAVVLEWHQLYA) threads the bilayer. The Lumenal portion of the chain corresponds to 472–482 (SLWGFKIYTSP). A helical membrane pass occupies residues 483–503 (GIMLFTFIVLIFLSSSVGIIL). Over 504–518 (TYIQLSGEDHEWWWR) the chain is Cytoplasmic. The helical transmembrane segment at 519-539 (SILCGGFTAVFMYGYGVLFYL) threads the bilayer. At 540–550 (RSDMTGFLQLS) the chain is on the lumenal side. The chain crosses the membrane as a helical span at residues 551–571 (FYLGYTALLCYALFLVLGTIS). Residues 572 to 589 (FLASLMFIRHIYRSVKLE) are Cytoplasmic-facing. The Endoplasmic reticulum export signal signature appears at 578-583 (FIRHIY). The Golgi retention signal signature appears at 587–589 (KLE).

It belongs to the nonaspanin (TM9SF) (TC 9.A.2) family. As to expression, expressed in the root cap and in giant cells.

The protein resides in the endosome membrane. Its subcellular location is the golgi apparatus membrane. In Arabidopsis thaliana (Mouse-ear cress), this protein is Transmembrane 9 superfamily member 5.